A 330-amino-acid chain; its full sequence is MVFSSIQAYLDSSNWQQAPPSNYNHDGTGASANGGHVLRPQLQPQQQPQQQPHPNGSGGGGGGGGGSIRAGSMVDRARQANVALPEAALKCPRCESTNTKFCYFNNYSLTQPRHFCKTCRRYWTRGGALRNVPVGGGCRRNRRTKSNSNNNNNSTATSNNTSFSSGNASTISTILSSHYGGNQESILSQILSPARLMNPTYNHLGDLTSNTKTDNNMSLLNYGGLSQDLRSIHMGASGGSLMSCVDEWRSASYHQQSSMGGGNLEDSSNPNPSANGFYSFESPRITSASISSALASQFSSVKVEDNPYKWVNVNGNCSSWNDLSAFGSSR.

Over residues Asn14 to His25 the composition is skewed to polar residues. A disordered region spans residues Asn14–Ala70. The segment covering Pro40 to Asn55 has biased composition (low complexity). Positions Gly56 to Ile68 are enriched in gly residues. The Dof-type zinc finger occupies Leu89–Arg143. Residues Cys91, Cys94, Cys116, and Cys119 each coordinate Zn(2+). Disordered stretches follow at residues Pro133–Ser165 and Gln255–Gly276. The span at Ser146–Ser165 shows a compositional bias: low complexity. Residues Glu265–Gly276 are compositionally biased toward polar residues.

In terms of tissue distribution, specific to the vascular tissues. The PEAR proteins (e.g. DOF2.4, DOF5.1, DOF3.2, DOF1.1, DOF5.6 and DOF5.3) form a short-range concentration gradient that peaks at protophloem sieve elements (PSE).

Its subcellular location is the nucleus. It localises to the symplast. Its function is as follows. Transcription factor that binds specifically to a 5'-AA[AG]G-3' consensus core sequence. Probably involved in early processes for vascular development. The PEAR proteins (e.g. DOF2.4, DOF5.1, DOF3.2, DOF1.1, DOF5.6 and DOF5.3) activate gene expression that promotes radial growth of protophloem sieve elements. Triggers the transcription of HD-ZIP III genes, especially in the central domain of vascular tissue. This chain is Dof zinc finger protein DOF2.4, found in Arabidopsis thaliana (Mouse-ear cress).